Consider the following 79-residue polypeptide: Cytochrome b (79 aa).

The next 3 membrane-spanning stretches (helical) occupy residues 1 to 7 (SALFLAM), 31 to 52 (WLIRYIHANGASLFFICLYLHI), and 67 to 79 (WNIGIILLFLTMA). Histidine 37 and histidine 51 together coordinate heme b.

It belongs to the cytochrome b family. In terms of assembly, the cytochrome bc1 complex contains 11 subunits: 3 respiratory subunits (MT-CYB, CYC1 and UQCRFS1), 2 core proteins (UQCRC1 and UQCRC2) and 6 low-molecular weight proteins (UQCRH/QCR6, UQCRB/QCR7, UQCRQ/QCR8, UQCR10/QCR9, UQCR11/QCR10 and a cleavage product of UQCRFS1). This cytochrome bc1 complex then forms a dimer. Requires heme b as cofactor.

Its subcellular location is the mitochondrion inner membrane. In terms of biological role, component of the ubiquinol-cytochrome c reductase complex (complex III or cytochrome b-c1 complex) that is part of the mitochondrial respiratory chain. The b-c1 complex mediates electron transfer from ubiquinol to cytochrome c. Contributes to the generation of a proton gradient across the mitochondrial membrane that is then used for ATP synthesis. The polypeptide is Cytochrome b (MT-CYB) (Dipodomys panamintinus (Panamint kangaroo rat)).